The primary structure comprises 418 residues: 1-acylglycerol-3-phosphate O-acyltransferase (418 aa).

The AB hydrolase-1 domain maps to 121–251 (PTLVMVHGYG…RATWKGAVLN (131 aa)). A GXSXG motif is present at residues 197–201 (GHSFG). Positions 379–384 (HFVFID) match the HXXXXD motif motif.

Belongs to the peptidase S33 family. ABHD4/ABHD5 subfamily.

Its subcellular location is the cytoplasm. The catalysed reaction is a 1-acyl-sn-glycero-3-phosphate + an acyl-CoA = a 1,2-diacyl-sn-glycero-3-phosphate + CoA. In terms of biological role, lysophosphatidic acid acyltransferase which functions in phosphatidic acid biosynthesis. Is highly specific for lysophosphatidic acid and able to use different acyl-CoA donors. May regulate neutral lipid accumulation and participate in the regulation of lipid turnover in vegetative cells. Possesses additional triacylglycerol lipase and phospholipase A2 activities in vitro. Is not active as esterase or lysophospholipase. The protein is 1-acylglycerol-3-phosphate O-acyltransferase of Arabidopsis thaliana (Mouse-ear cress).